Reading from the N-terminus, the 150-residue chain is Deoxyuridine 5'-triphosphate nucleotidohydrolase (150 aa).

Residues 68 to 70 (RSG), Asn81, 85 to 87 (TID), and Lys95 contribute to the substrate site.

The protein belongs to the dUTPase family. Requires Mg(2+) as cofactor.

It catalyses the reaction dUTP + H2O = dUMP + diphosphate + H(+). Its pathway is pyrimidine metabolism; dUMP biosynthesis; dUMP from dCTP (dUTP route): step 2/2. Its function is as follows. This enzyme is involved in nucleotide metabolism: it produces dUMP, the immediate precursor of thymidine nucleotides and it decreases the intracellular concentration of dUTP so that uracil cannot be incorporated into DNA. The polypeptide is Deoxyuridine 5'-triphosphate nucleotidohydrolase (Rickettsia bellii (strain OSU 85-389)).